Here is a 113-residue protein sequence, read N- to C-terminus: Outer membrane protein assembly factor BamE (113 aa).

Residues 1–19 (MRCKTLTAAAAVLLMLTAG) form the signal peptide. Cys20 carries the N-palmitoyl cysteine lipid modification. Cys20 is lipidated: S-diacylglycerol cysteine.

The protein belongs to the BamE family. Part of the Bam complex, which is composed of the outer membrane protein BamA, and four lipoproteins BamB, BamC, BamD and BamE.

The protein localises to the cell outer membrane. In terms of biological role, part of the outer membrane protein assembly complex, which is involved in assembly and insertion of beta-barrel proteins into the outer membrane. The sequence is that of Outer membrane protein assembly factor BamE from Escherichia coli O6:H1 (strain CFT073 / ATCC 700928 / UPEC).